A 109-amino-acid chain; its full sequence is Aquaporin-2 (109 aa).

Topologically, residues Ser-1–Arg-6 are cytoplasmic. The helical transmembrane segment at Ala-7–Leu-27 threads the bilayer. The Extracellular portion of the chain corresponds to Asn-28–Ser-35. The chain crosses the membrane as a helical span at residues Val-36–Leu-54. The Cytoplasmic segment spans residues Gly-55 to Gly-59. Residues Ala-60–Ala-69 constitute an intramembrane region (discontinuously helical). The short motif at Asn-63–Ala-65 is the NPA 1 element. Over Cys-70–Arg-80 the chain is Cytoplasmic. The helical transmembrane segment at Ala-81–Val-102 threads the bilayer. Residues Thr-103 to Gly-109 lie on the Extracellular side of the membrane.

It belongs to the MIP/aquaporin (TC 1.A.8) family. Homotetramer. Post-translationally, serine phosphorylation is necessary and sufficient for expression at the apical membrane. Endocytosis is not phosphorylation-dependent. In terms of processing, N-glycosylated.

Its subcellular location is the apical cell membrane. It localises to the basolateral cell membrane. The protein resides in the cell membrane. The protein localises to the cytoplasmic vesicle membrane. It is found in the golgi apparatus. Its subcellular location is the trans-Golgi network membrane. The catalysed reaction is H2O(in) = H2O(out). It catalyses the reaction glycerol(in) = glycerol(out). Forms a water-specific channel that provides the plasma membranes of renal collecting duct with high permeability to water, thereby permitting water to move in the direction of an osmotic gradient. Plays an essential role in renal water homeostasis. Could also be permeable to glycerol. The protein is Aquaporin-2 of Erinaceus europaeus (Western European hedgehog).